Consider the following 251-residue polypeptide: Ribonuclease HII (251 aa).

The region spanning 32 to 223 (GPVAGVDEAG…VRERLGLRPL (192 aa)) is the RNase H type-2 domain. Residues Asp38, Glu39, and Asp132 each coordinate a divalent metal cation.

This sequence belongs to the RNase HII family. It depends on Mn(2+) as a cofactor. Mg(2+) serves as cofactor.

It is found in the cytoplasm. It catalyses the reaction Endonucleolytic cleavage to 5'-phosphomonoester.. Endonuclease that specifically degrades the RNA of RNA-DNA hybrids. The sequence is that of Ribonuclease HII from Nocardia farcinica (strain IFM 10152).